The primary structure comprises 637 residues: tRNA uridine 5-carboxymethylaminomethyl modification enzyme MnmG (637 aa).

Residues G15–G20, I127, and S182 contribute to the FAD site. G276–F290 serves as a coordination point for NAD(+). Residue Q373 participates in FAD binding.

The protein belongs to the MnmG family. As to quaternary structure, homodimer. Heterotetramer of two MnmE and two MnmG subunits. Requires FAD as cofactor.

The protein localises to the cytoplasm. In terms of biological role, NAD-binding protein involved in the addition of a carboxymethylaminomethyl (cmnm) group at the wobble position (U34) of certain tRNAs, forming tRNA-cmnm(5)s(2)U34. This chain is tRNA uridine 5-carboxymethylaminomethyl modification enzyme MnmG, found in Streptococcus pneumoniae (strain ATCC BAA-255 / R6).